Consider the following 272-residue polypeptide: Troponin T, fast skeletal muscle (272 aa).

Residues 1–50 show a composition bias toward acidic residues; it reads MSDEETEQVEEQYEEEEEAQEEEVQEEAPEPEEVQEDAVAEEEREEDEEE. Residues 1–75 form a disordered region; sequence MSDEETEQVE…EKVDFDDIQK (75 aa). At Ser2 the chain carries N-acetylserine. Ser2 carries the phosphoserine modification. Residues 63 to 75 are compositionally biased toward basic and acidic residues; it reads PEGEKVDFDDIQK. Ser91 carries the post-translational modification Phosphoserine. The segment covering 114-156 has biased composition (basic and acidic residues); it reads RAERAEQQRIRAEKEREPQNRLAEEKARREEEDAKRRAEDDMK. The disordered stretch occupies residues 114-193; sequence RAERAEQQRI…TAREMKKKIL (80 aa). 3 positions are modified to phosphoserine: Ser162, Ser169, and Ser170. Positions 184 to 193 are enriched in basic and acidic residues; it reads TAREMKKKIL. A Phosphoserine modification is found at Ser206. Tyr222 carries the post-translational modification Phosphotyrosine. The tract at residues 248 to 272 is disordered; that stretch reads RIDQAQKHSKKAGATAKGKVGGRWK.

Belongs to the troponin T family. Expressed predominantly in skeletal muscle.

Troponin T is the tropomyosin-binding subunit of troponin, the thin filament regulatory complex which confers calcium-sensitivity to striated muscle actomyosin ATPase activity. The protein is Troponin T, fast skeletal muscle (Tnnt3) of Mus musculus (Mouse).